The chain runs to 229 residues: Non-structural protein P8 (229 aa).

Helical transmembrane passes span 119–139 and 162–182; these read IIHMTLLIAAVVALLTSVCTL and SLNPMLGVVNVGATFLMMVCA.

The protein belongs to the orbivirus NS3 family. As to quaternary structure, forms homooligomers via coiled-coil motif. Interacts with host OPTN; this interaction inhibits innate immune response.

Its subcellular location is the host cell membrane. The protein resides in the host Golgi apparatus. Its function is as follows. Plays a role in the inhibition of host innate immune response. Interacts with host OPTN and thus inhibits the recruitment of TBK1 to the host Golgi apparatus. In turn, downstream partner IRF3 cannot be activated and IFN-beta production is impaired. In terms of biological role, facilitates viral particle release either by increasing plasma membrane permeability through a viroporin-like activity or by viral budding. The protein is Non-structural protein P8 (Segment-10) of Antilocapra americana (Pronghorn).